A 147-amino-acid chain; its full sequence is Protein LOL1 (147 aa).

The segment at 1–38 is disordered; sequence MVASRAPRSESPWLKKPMHGVSGSTAMASTPWSSMPPS. The segment covering 22–38 has biased composition (polar residues); sequence SGSTAMASTPWSSMPPS. A putative zinc finger region spans residues 47–77; sequence QLVCSGCRNLLMYPAGATSICCAVCGTVTAV.

The protein localises to the nucleus. Its function is as follows. Putative zinc finger that may be involved in programmed cell death and defense response. In Oryza sativa subsp. japonica (Rice), this protein is Protein LOL1 (LOL1).